A 267-amino-acid chain; its full sequence is Ribosomal RNA small subunit methyltransferase A (267 aa).

Positions 16, 18, 43, 64, 89, and 110 each coordinate S-adenosyl-L-methionine.

The protein belongs to the class I-like SAM-binding methyltransferase superfamily. rRNA adenine N(6)-methyltransferase family. RsmA subfamily.

The protein resides in the cytoplasm. It catalyses the reaction adenosine(1518)/adenosine(1519) in 16S rRNA + 4 S-adenosyl-L-methionine = N(6)-dimethyladenosine(1518)/N(6)-dimethyladenosine(1519) in 16S rRNA + 4 S-adenosyl-L-homocysteine + 4 H(+). Its function is as follows. Specifically dimethylates two adjacent adenosines (A1518 and A1519) in the loop of a conserved hairpin near the 3'-end of 16S rRNA in the 30S particle. May play a critical role in biogenesis of 30S subunits. The protein is Ribosomal RNA small subunit methyltransferase A of Pseudomonas putida (strain ATCC 47054 / DSM 6125 / CFBP 8728 / NCIMB 11950 / KT2440).